We begin with the raw amino-acid sequence, 288 residues long: MRIIVPATSANIGPGFDSIGVALSKYLSIEVLEESTEWLVEHNLVNIPKDHTNLLIQTALHVKSDLAPHRLKMFSDIPLARGLGSSSSVIVAGIELANQLGNLALSQKEKLEIATRLEGHPDNVAPAIFGDLVISSIVKNDIKSLEVMFPDSSFIAFIPNYELKTSDSRNVLPQKLSYEDAVASSSVANVMVASLLKGDLVTAGWAIERDLFHERYRQPLVKEFGVIKQISTQNGAYATYLSGAGPTVMVLCSKEKEQPIVTELSKLCLDGQIQVLNIERKGVRVEKR.

Position 78-88 (78-88 (PLARGLGSSSS)) interacts with ATP.

It belongs to the GHMP kinase family. Homoserine kinase subfamily.

Its subcellular location is the cytoplasm. It carries out the reaction L-homoserine + ATP = O-phospho-L-homoserine + ADP + H(+). The protein operates within amino-acid biosynthesis; L-threonine biosynthesis; L-threonine from L-aspartate: step 4/5. Its function is as follows. Catalyzes the ATP-dependent phosphorylation of L-homoserine to L-homoserine phosphate. This chain is Homoserine kinase, found in Streptococcus agalactiae serotype III (strain NEM316).